A 270-amino-acid chain; its full sequence is Putative phosphoenolpyruvate synthase regulatory protein (270 aa).

Residue 149 to 156 (GVSRSGKT) participates in ADP binding.

This sequence belongs to the pyruvate, phosphate/water dikinase regulatory protein family. PSRP subfamily.

It catalyses the reaction [pyruvate, water dikinase] + ADP = [pyruvate, water dikinase]-phosphate + AMP + H(+). The enzyme catalyses [pyruvate, water dikinase]-phosphate + phosphate + H(+) = [pyruvate, water dikinase] + diphosphate. Bifunctional serine/threonine kinase and phosphorylase involved in the regulation of the phosphoenolpyruvate synthase (PEPS) by catalyzing its phosphorylation/dephosphorylation. The polypeptide is Putative phosphoenolpyruvate synthase regulatory protein (Alteromonas mediterranea (strain DSM 17117 / CIP 110805 / LMG 28347 / Deep ecotype)).